Reading from the N-terminus, the 273-residue chain is Shikimate dehydrogenase (NADP(+)) (273 aa).

Residues Ser19–Ser21 and Thr66 each bind shikimate. Lys70 functions as the Proton acceptor in the catalytic mechanism. Glu82 contacts NADP(+). Residues Asn91 and Asp107 each contribute to the shikimate site. Residues Gly131–Ala135 and Met217 contribute to the NADP(+) site. Tyr219 is a shikimate binding site. Gly241 is an NADP(+) binding site.

The protein belongs to the shikimate dehydrogenase family. Homodimer.

It carries out the reaction shikimate + NADP(+) = 3-dehydroshikimate + NADPH + H(+). Its pathway is metabolic intermediate biosynthesis; chorismate biosynthesis; chorismate from D-erythrose 4-phosphate and phosphoenolpyruvate: step 4/7. In terms of biological role, involved in the biosynthesis of the chorismate, which leads to the biosynthesis of aromatic amino acids. Catalyzes the reversible NADPH linked reduction of 3-dehydroshikimate (DHSA) to yield shikimate (SA). The polypeptide is Shikimate dehydrogenase (NADP(+)) (Buchnera aphidicola subsp. Schizaphis graminum (strain Sg)).